A 1368-amino-acid chain; its full sequence is DNA-directed RNA polymerase subunit beta (1368 aa).

Belongs to the RNA polymerase beta chain family. As to quaternary structure, the RNAP catalytic core consists of 2 alpha, 1 beta, 1 beta' and 1 omega subunit. When a sigma factor is associated with the core the holoenzyme is formed, which can initiate transcription.

The catalysed reaction is RNA(n) + a ribonucleoside 5'-triphosphate = RNA(n+1) + diphosphate. In terms of biological role, DNA-dependent RNA polymerase catalyzes the transcription of DNA into RNA using the four ribonucleoside triphosphates as substrates. This Cupriavidus pinatubonensis (strain JMP 134 / LMG 1197) (Cupriavidus necator (strain JMP 134)) protein is DNA-directed RNA polymerase subunit beta.